A 129-amino-acid chain; its full sequence is Protein LLP homolog (129 aa).

A compositionally biased stretch (basic residues) spans 1–21 (MAKSLRSKWKRKMRAEKRKKN). Residues 1–27 (MAKSLRSKWKRKMRAEKRKKNAPKEAS) form a disordered region. Glycyl lysine isopeptide (Lys-Gly) (interchain with G-Cter in SUMO2) cross-links involve residues lysine 67 and lysine 74. Over residues 100-122 (RQRKRLKAKREKRKGKSKAKAVK) the composition is skewed to basic residues. The tract at residues 100-129 (RQRKRLKAKREKRKGKSKAKAVKVAKGLAW) is disordered.

This sequence belongs to the learning-associated protein family. As to quaternary structure, interacts with CTCF, MYO1C and with the transcriptional machinery, including RNA polymerase II and TBP.

The protein localises to the nucleus. Its subcellular location is the nucleolus. The protein resides in the chromosome. In terms of biological role, in hippocampal neurons, regulates dendritic and spine growth and synaptic transmission. This is Protein LLP homolog (LLPH) from Homo sapiens (Human).